Reading from the N-terminus, the 170-residue chain is Large ribosomal subunit protein uL10 (170 aa).

Belongs to the universal ribosomal protein uL10 family. In terms of assembly, part of the ribosomal stalk of the 50S ribosomal subunit. The N-terminus interacts with L11 and the large rRNA to form the base of the stalk. The C-terminus forms an elongated spine to which L12 dimers bind in a sequential fashion forming a multimeric L10(L12)X complex.

Functionally, forms part of the ribosomal stalk, playing a central role in the interaction of the ribosome with GTP-bound translation factors. This is Large ribosomal subunit protein uL10 (rplJ) from Chlamydia pneumoniae (Chlamydophila pneumoniae).